The following is a 353-amino-acid chain: uncharacterized protein (353 aa).

This is an uncharacterized protein from Methanocaldococcus jannaschii (strain ATCC 43067 / DSM 2661 / JAL-1 / JCM 10045 / NBRC 100440) (Methanococcus jannaschii).